A 287-amino-acid chain; its full sequence is Nucleotide-binding protein VIBHAR_03667 (287 aa).

8 to 15 contributes to the ATP binding site; it reads GHSGAGKS. 56–59 serves as a coordination point for GTP; that stretch reads DIRN.

The protein belongs to the RapZ-like family.

Its function is as follows. Displays ATPase and GTPase activities. This Vibrio campbellii (strain ATCC BAA-1116) protein is Nucleotide-binding protein VIBHAR_03667.